A 491-amino-acid chain; its full sequence is NADH-ubiquinone oxidoreductase chain 2 (491 aa).

14 consecutive transmembrane segments (helical) span residues 11-31, 38-58, 74-94, 106-126, 129-149, 161-181, 210-230, 238-258, 270-290, 298-318, 330-350, 375-395, 411-433, and 463-483; these read MIKY…SISI, VHII…VIGI, ELIK…IKMF, ITDE…ISME, NLIT…ILAL, LKYY…IVSI, IALI…HGWL, GMLM…MVLI, AIMF…VGTI, LIRF…LMLA, VYYL…IMGF, GAIV…MTNF, VYLT…NLVK, and IVLG…ILNV.

This sequence belongs to the complex I subunit 2 family.

The protein resides in the mitochondrion inner membrane. It catalyses the reaction a ubiquinone + NADH + 5 H(+)(in) = a ubiquinol + NAD(+) + 4 H(+)(out). Core subunit of the mitochondrial membrane respiratory chain NADH dehydrogenase (Complex I) that is believed to belong to the minimal assembly required for catalysis. Complex I functions in the transfer of electrons from NADH to the respiratory chain. The immediate electron acceptor for the enzyme is believed to be ubiquinone. The sequence is that of NADH-ubiquinone oxidoreductase chain 2 (nad2) from Dictyostelium citrinum (Slime mold).